The chain runs to 169 residues: Der GTPase-activating protein YihI (169 aa).

Disordered stretches follow at residues 1–100 and 144–169; these read MKPS…AELE and GLSY…LRGN. Residues 10–19 show a composition bias toward basic residues; that stretch reads SKGHAKARRK. A compositionally biased stretch (basic and acidic residues) spans 20–30; sequence TREELDQEARD. Basic residues predominate over residues 31–40; that stretch reads RKRQKKRRGH. The segment covering 49 to 58 has biased composition (polar residues); the sequence is GNTSSGSKGQ. Positions 147 to 159 are enriched in acidic residues; it reads YDDDEEEEEDEKQ. The span at 160 to 169 shows a compositional bias: basic and acidic residues; it reads EDMMRLLRGN.

This sequence belongs to the YihI family. Interacts with Der.

Its function is as follows. A GTPase-activating protein (GAP) that modifies Der/EngA GTPase function. May play a role in ribosome biogenesis. This chain is Der GTPase-activating protein YihI, found in Escherichia coli (strain SMS-3-5 / SECEC).